The sequence spans 232 residues: UPF0177 protein in abiGi 5'region (232 aa).

A run of 6 helical transmembrane segments spans residues 12–32 (YLSL…ILAY), 47–67 (VVAT…GILI), 86–106 (LLFL…SYTY), 124–144 (SIQI…APIF), 165–185 (IVSC…LIVY), and 206–226 (ILVH…LQVI).

This sequence belongs to the UPF0177 family.

Its subcellular location is the cell membrane. Its function is as follows. The function of this protein is currently unknown, but it has been shown that it is not necessary for phage resistance. This chain is UPF0177 protein in abiGi 5'region, found in Lactococcus lactis subsp. cremoris (Streptococcus cremoris).